The chain runs to 359 residues: Insulin gene enhancer protein isl-2a (359 aa).

LIM zinc-binding domains are found at residues C27–D80 and C30–H143. The interval E171 to K190 is disordered. Positions T191–S250 form a DNA-binding region, homeobox. The span at E326–S336 shows a compositional bias: low complexity. The interval E326–T359 is disordered. Residues D337 to T359 show a composition bias toward polar residues.

The protein localises to the nucleus. Binds to one of the cis-acting domain of the insulin gene enhancer. May be involved in subtype specialization of primary motoneurons. The sequence is that of Insulin gene enhancer protein isl-2a (isl2a) from Danio rerio (Zebrafish).